The chain runs to 198 residues: Transcriptional regulator GfcR (198 aa).

The protein belongs to the purine/pyrimidine phosphoribosyltransferase family. GfcR subfamily.

The chain is Transcriptional regulator GfcR from Thermoplasma acidophilum (strain ATCC 25905 / DSM 1728 / JCM 9062 / NBRC 15155 / AMRC-C165).